Reading from the N-terminus, the 313-residue chain is WD repeat-containing protein 82 (313 aa).

WD repeat units lie at residues 19-58, 105-144, 146-184, 192-231, 236-276, and 280-313; these read ENSD…PKRT, GHSK…CQGL, HLQG…KGPF, DRTC…VMHT, NNSK…KVAV, and KHTG…TIDD.

It belongs to the WD repeat SWD2 family. In terms of assembly, component of the SET1/COMPASS complex. Component of the PNUTS-PP1 phosphatase complex.

Its subcellular location is the nucleus. The protein localises to the chromosome. The protein resides in the cytoplasm. Functionally, regulatory component of the SET1/COMPASS complex implicated in the tethering of this complex to transcriptional start sites of active genes. Facilitates histone H3 'Lys-4' methylation (H3K4me) via recruitment of the SETD1A or SETD1B to the 'Ser-5' phosphorylated C-terminal domain (CTD) of RNA polymerase II large subunit (POLR2A). Component of the PNUTS-PP1 protein phosphatase complex, a protein phosphatase 1 (PP1) complex that promotes RNA polymerase II transcription pause-release, allowing transcription elongation. This Xenopus tropicalis (Western clawed frog) protein is WD repeat-containing protein 82 (wdr82).